The sequence spans 343 residues: MAEEVSNKQVILKNYVTGYPKESDMEIKNVTIKLKVPEGSNDVVVKNLYLSCDPYMRSRMRKIEGSYVESFAPGSPITGYGVAKVLESGDPKFQKGDLVWGMTGWEEYSIITPTQTLFKIHDKDVPLSYYTGILGMPGMTAYAGFHEVCSPKKGETVFVSAASGAVGQLVGQFAKMLGCYVVGSAGSKEKVDLLKSKFGFDEAFNYKEEQDLSAALKRYFPDGIDIYFENVGGKMLDAVLVNMKLYGRIAVCGMISQYNLEQTEGVHNLFCLITKRIRMEGFLVFDYYHLYPKYLEMVIPQIKAGKVVYVEDVAHGLESAPTALVGLFSGRNIGKQVVMVSRE.

Substrate is bound by residues Tyr-55 and Tyr-80. Residues 165-166, Gly-186, Lys-190, Tyr-206, Asn-230, Cys-252, Tyr-258, 282-284, and Asn-332 contribute to the NADP(+) site; these read AV and FLV.

Belongs to the NADP-dependent oxidoreductase L4BD family. Homodimer.

It carries out the reaction an n-alkanal + NADP(+) = an alk-2-enal + NADPH + H(+). Functionally, reduces the C=C double bonds of alpha, beta unsaturated enones, but has no activity on enones with an endocyclic C=C double-bond. Shows a high specificity for NADPH as the hybrid donor. Substrates are 1-nitrocyclohexene, 2-methylpentenal, trans-cinnamaldehyde, methyl-trans-2-methylcinnamaldehyde, trans-2-nonenal and 1-octen-3-one. Reduced activity with aplha-methyl transcinnamaldehyde, 1-cyclohexene-1-carboxaldehyde, methyl crotonate, (R)-pulegone, and dimethyl itaconate and no activity with maleimides, citral, (5R)- or (5S)-carvone, (S)-perillyl alcohol, and substituted cyclohexenones and cyclopentenones. May also act as a allyl-alcohol dehydrogenase by catalyzing the dehydrogenation of secondary allylic alcohols rather than saturated secondary alcohols. Allyl-alcohol dehydrogenase is specific for the S-stereoisomer of the alcohols. In Nicotiana tabacum (Common tobacco), this protein is 2-alkenal reductase (NADP(+)-dependent) (DBR).